The chain runs to 598 residues: Membrane protein insertase YidC (598 aa).

Residues 7-27 (NYFIAIALSVLIVLGWQFLYM) traverse the membrane as a helical segment. Residues 37–76 (AQEAQKAQQQTEQVQQPAAGGQTPAQTSGAAPSGQAAATA) form a disordered region. The span at 40 to 76 (AQKAQQQTEQVQQPAAGGQTPAQTSGAAPSGQAAATA) shows a compositional bias: low complexity. The next 4 membrane-spanning stretches (helical) occupy residues 377–397 (FGVA…PLAS), 447–467 (WPVA…YITI), 492–512 (LFGL…WPLI), and 538–558 (WMPL…VIYW).

This sequence belongs to the OXA1/ALB3/YidC family. Type 1 subfamily. Interacts with the Sec translocase complex via SecD. Specifically interacts with transmembrane segments of nascent integral membrane proteins during membrane integration.

The protein resides in the cell inner membrane. In terms of biological role, required for the insertion and/or proper folding and/or complex formation of integral membrane proteins into the membrane. Involved in integration of membrane proteins that insert both dependently and independently of the Sec translocase complex, as well as at least some lipoproteins. Aids folding of multispanning membrane proteins. This chain is Membrane protein insertase YidC, found in Rhizobium johnstonii (strain DSM 114642 / LMG 32736 / 3841) (Rhizobium leguminosarum bv. viciae).